The primary structure comprises 522 residues: Cytochrome b mRNA maturase bI3 (522 aa).

Residues 1–31 (MTIRKSNPYLSLVNSYLMDSPQPSSMNYWWN) are Mitochondrial matrix-facing. The interval 1–163 (MTIRKSNPYL…MPFMGGDLVP (163 aa)) is cytochrome b. Residues 32 to 52 (VGSLLGLCLVMQMASGMFLAM) traverse the membrane as a helical segment. The Mitochondrial intermembrane portion of the chain corresponds to 53 to 84 (HYSSSMELAFNSVEHMMRDVNAGWLMRYIHAN). The chain crosses the membrane as a helical span at residues 85-105 (GASFFFMCLYLHMGKALYYGS). At 106 to 110 (YKSPR) the chain is on the mitochondrial matrix side. A helical membrane pass occupies residues 111 to 131 (VLVWSMGVMMFMLTMATAFMG). Residues 132 to 154 (YCLVYGQMSHWGATVITNLLSAM) are Mitochondrial intermembrane-facing. Residues 155 to 175 (PFMGGDLVPLSIILSLYLLYI) form a helical membrane-spanning segment. Residues 164 to 522 (LSIILSLYLL…PYMSWHQKEQ (359 aa)) are maturase. At 176-522 (SLKTFMKMIF…PYMSWHQKEQ (347 aa)) the chain is on the mitochondrial matrix side.

The protein in the N-terminal section; belongs to the cytochrome b family. In the C-terminal section; belongs to the LAGLIDADG endonuclease family.

Its subcellular location is the mitochondrion inner membrane. Its function is as follows. Mitochondrial mRNA maturase required for splicing of intron 3 of the cytochrome b (COB) gene, containing its own coding sequence. This chain is Cytochrome b mRNA maturase bI3 (bI3), found in Debaryomyces hansenii (strain ATCC 36239 / CBS 767 / BCRC 21394 / JCM 1990 / NBRC 0083 / IGC 2968) (Yeast).